The primary structure comprises 349 residues: Dihydroorotate dehydrogenase (quinone) (349 aa).

Residues 59 to 63 (PGFDK) and Thr-83 each bind FMN. Lys-63 is a binding site for substrate. 108-112 (NRMGF) lines the substrate pocket. FMN-binding residues include Asn-142 and Asn-173. Substrate is bound at residue Asn-173. Catalysis depends on Ser-176, which acts as the Nucleophile. Asn-178 is a substrate binding site. FMN is bound by residues Lys-212 and Ser-240. Residue 241–242 (NT) participates in substrate binding. FMN-binding positions include Gly-262, Gly-291, and 312 to 313 (YS).

Belongs to the dihydroorotate dehydrogenase family. Type 2 subfamily. As to quaternary structure, monomer. The cofactor is FMN.

The protein localises to the cell membrane. It carries out the reaction (S)-dihydroorotate + a quinone = orotate + a quinol. It participates in pyrimidine metabolism; UMP biosynthesis via de novo pathway; orotate from (S)-dihydroorotate (quinone route): step 1/1. In terms of biological role, catalyzes the conversion of dihydroorotate to orotate with quinone as electron acceptor. In Novosphingobium aromaticivorans (strain ATCC 700278 / DSM 12444 / CCUG 56034 / CIP 105152 / NBRC 16084 / F199), this protein is Dihydroorotate dehydrogenase (quinone).